The following is a 199-amino-acid chain: Glycerol-3-phosphate acyltransferase (199 aa).

Helical transmembrane passes span 5–25, 56–76, 83–103, 118–138, and 141–161; these read VLTI…SAVL, SAAL…YLAF, IALG…IFFG, APIG…LVLV, and YSSF…WWLD.

This sequence belongs to the PlsY family. As to quaternary structure, probably interacts with PlsX.

The protein resides in the cell inner membrane. It catalyses the reaction an acyl phosphate + sn-glycerol 3-phosphate = a 1-acyl-sn-glycero-3-phosphate + phosphate. Its pathway is lipid metabolism; phospholipid metabolism. Its function is as follows. Catalyzes the transfer of an acyl group from acyl-phosphate (acyl-PO(4)) to glycerol-3-phosphate (G3P) to form lysophosphatidic acid (LPA). This enzyme utilizes acyl-phosphate as fatty acyl donor, but not acyl-CoA or acyl-ACP. The polypeptide is Glycerol-3-phosphate acyltransferase (Shewanella halifaxensis (strain HAW-EB4)).